The following is a 271-amino-acid chain: 4-diphosphocytidyl-2-C-methyl-D-erythritol kinase (271 aa).

Residue lysine 17 is part of the active site. 97-107 (PVGSGLGGGSS) provides a ligand contact to ATP. Aspartate 137 is a catalytic residue.

It belongs to the GHMP kinase family. IspE subfamily.

The enzyme catalyses 4-CDP-2-C-methyl-D-erythritol + ATP = 4-CDP-2-C-methyl-D-erythritol 2-phosphate + ADP + H(+). It functions in the pathway isoprenoid biosynthesis; isopentenyl diphosphate biosynthesis via DXP pathway; isopentenyl diphosphate from 1-deoxy-D-xylulose 5-phosphate: step 3/6. Its function is as follows. Catalyzes the phosphorylation of the position 2 hydroxy group of 4-diphosphocytidyl-2C-methyl-D-erythritol. This chain is 4-diphosphocytidyl-2-C-methyl-D-erythritol kinase, found in Thermotoga maritima (strain ATCC 43589 / DSM 3109 / JCM 10099 / NBRC 100826 / MSB8).